Here is a 553-residue protein sequence, read N- to C-terminus: Putative transport protein CKO_00031 (553 aa).

5 consecutive transmembrane segments (helical) span residues 4 to 24, 28 to 48, 65 to 85, 95 to 115, and 158 to 178; these read IALTVSVLALVAVVGLWIGNI, GVGFGIGGVLFGGIIVGHFVD, FGLILFVYTIGIQVGPGFFAS, LFAILIVIIGGLVTAILHKIF, and MSYAMAYPFGICGILLTMWLM. RCK C-terminal domains are found at residues 192-276 and 279-361; these read QHED…VIGQ and DTSL…VVGN. A run of 6 helical transmembrane segments spans residues 371–391, 393–413, 437–457, 464–484, 493–513, and 533–553; these read MLPVFIGIGLGVLLGSIPLFV, GFPVALKLGLAGGPLIMALIL, LGIVLFLAVVGLKSGGDFIDT, LSWIGYGIFITAIPLITVGLL, YLTLCGMLAGSMTDPPALAFA, and LVMFLRIITPQLLAVLFWGLG.

Belongs to the AAE transporter (TC 2.A.81) family. YidE subfamily.

It localises to the cell membrane. This chain is Putative transport protein CKO_00031, found in Citrobacter koseri (strain ATCC BAA-895 / CDC 4225-83 / SGSC4696).